We begin with the raw amino-acid sequence, 178 residues long: MNPRRKKRLAIVGSILIGIGVVSGLVLYALSQNIDLFFTPSEITQGKKETGLKPSLGQRIRIGGLVVPGSVKRDPENLKVSFRLSDMAMPIVFKDSDPMVTVYYEGILPDLFREGQGIVANGTLTEHPPTGLSIEASEVLAKHDENYMPAELAEAAGQKHDKATYSDKQLESKKTNSY.

Residues 1–8 are Cytoplasmic-facing; it reads MNPRRKKR. Residues 9–29 form a helical; Signal-anchor for type II membrane protein membrane-spanning segment; it reads LAIVGSILIGIGVVSGLVLYA. Residues 30-178 lie on the Periplasmic side of the membrane; that stretch reads LSQNIDLFFT…QLESKKTNSY (149 aa). Positions 143 and 147 each coordinate heme. The interval 154-178 is disordered; the sequence is EAAGQKHDKATYSDKQLESKKTNSY. Positions 157-178 are enriched in basic and acidic residues; it reads GQKHDKATYSDKQLESKKTNSY.

Belongs to the CcmE/CycJ family.

The protein resides in the cell inner membrane. Heme chaperone required for the biogenesis of c-type cytochromes. Transiently binds heme delivered by CcmC and transfers the heme to apo-cytochromes in a process facilitated by CcmF and CcmH. The sequence is that of Cytochrome c-type biogenesis protein CcmE from Colwellia psychrerythraea (strain 34H / ATCC BAA-681) (Vibrio psychroerythus).